We begin with the raw amino-acid sequence, 56 residues long: MSKGTPSMGKCHKRTHVRCRRCGRLSYNFNRKTCVACGFGRSKRLRSYKWMRKAGY.

Positions 19, 22, 34, and 37 each coordinate Zn(2+). The C4-type zinc finger occupies 19 to 37 (CRRCGRLSYNFNRKTCVAC).

It belongs to the eukaryotic ribosomal protein eL37 family. The cofactor is Zn(2+).

Its function is as follows. Binds to the 23S rRNA. This is Large ribosomal subunit protein eL37 from Methanothrix thermoacetophila (strain DSM 6194 / JCM 14653 / NBRC 101360 / PT) (Methanosaeta thermophila).